A 365-amino-acid polypeptide reads, in one-letter code: Succinate--CoA ligase [ADP-forming] subunit beta (365 aa).

Residues 9 to 230 (KEIFRAEGIS…EMEEYEPEEF (222 aa)) enclose the ATP-grasp domain. ATP contacts are provided by residues K45, 52–54 (GRG), E90, I93, and E98. Mg(2+) contacts are provided by N190 and D203. Residues N244 and 300–302 (GIT) each bind substrate.

This sequence belongs to the succinate/malate CoA ligase beta subunit family. In terms of assembly, heterotetramer of two alpha and two beta subunits. Mg(2+) is required as a cofactor.

It catalyses the reaction succinate + ATP + CoA = succinyl-CoA + ADP + phosphate. The catalysed reaction is GTP + succinate + CoA = succinyl-CoA + GDP + phosphate. The protein operates within carbohydrate metabolism; tricarboxylic acid cycle; succinate from succinyl-CoA (ligase route): step 1/1. Succinyl-CoA synthetase functions in the citric acid cycle (TCA), coupling the hydrolysis of succinyl-CoA to the synthesis of either ATP or GTP and thus represents the only step of substrate-level phosphorylation in the TCA. The beta subunit provides nucleotide specificity of the enzyme and binds the substrate succinate, while the binding sites for coenzyme A and phosphate are found in the alpha subunit. This Methanothermobacter thermautotrophicus (strain ATCC 29096 / DSM 1053 / JCM 10044 / NBRC 100330 / Delta H) (Methanobacterium thermoautotrophicum) protein is Succinate--CoA ligase [ADP-forming] subunit beta.